We begin with the raw amino-acid sequence, 361 residues long: S-adenosylmethionine-dependent nucleotide dehydratase RSAD2 (361 aa).

A Radical SAM core domain is found at 69–289 (PTTPTSVNYH…LERHKEVSCL (221 aa)). [4Fe-4S] cluster contacts are provided by C83, C87, and C90. K197 is modified (N6-acetyllysine). K206 is covalently cross-linked (Glycyl lysine isopeptide (Lys-Gly) (interchain with G-Cter in ubiquitin)).

This sequence belongs to the radical SAM superfamily. RSAD2 family. Homodimer. Interacts with IRAK1 and TRAF6. Interacts with FPPS. Interacts with HADHB. Interacts (via C-terminus) with VAPA/VAP33 (via C-terminus). In terms of assembly, (Microbial infection) Interacts with human cytomegalovirus/HHV-5 protein vMIA/UL37; this interaction results in RSAD2/viperin relocalization from the endoplasmic reticulum to the mitochondria. As to quaternary structure, (Microbial infection) Interacts (via N-terminus) with enterovirus A71 protein 2C; this interaction inhibits viral replication. (Microbial infection) Interacts with herpes simplex virus 1/HHV-1 glycoprotein D; this interaction inhibits HHV-1 replication by facilitating IRF7-mediated IFN-beta production. [4Fe-4S] cluster is required as a cofactor. Acetylated by HAT1. HAT1-mediated acetylation of Lys-197 in turn recruits UBE4A that stimulates RSAD2 polyubiquitination leading to proteasomal degradation. Post-translationally, 'Lys-6'-linked polyubiquitination at Lys-206 leads to RSAD2 protein degradation.

The protein resides in the endoplasmic reticulum membrane. Its subcellular location is the golgi apparatus. The protein localises to the endoplasmic reticulum. It is found in the lipid droplet. It localises to the mitochondrion. The protein resides in the mitochondrion inner membrane. Its subcellular location is the mitochondrion outer membrane. The enzyme catalyses CTP + AH2 + S-adenosyl-L-methionine = 3'-deoxy-3',4'-didehydro-CTP + 5'-deoxyadenosine + L-methionine + A + H2O + H(+). IRAK1 and TRAF6 synergistically activate RSAD2 increasing its activity with CTP as substrate about 10-fold. In terms of biological role, interferon-inducible antiviral protein which plays a major role in the cell antiviral state induced by type I and type II interferon. Catalyzes the conversion of cytidine triphosphate (CTP) to 3'-deoxy-3',4'-didehydro-CTP (ddhCTP) via a SAM-dependent radical mechanism. In turn, ddhCTP acts as a chain terminator for the RNA-dependent RNA polymerases from multiple viruses and directly inhibits viral replication. Therefore, inhibits a wide range of DNA and RNA viruses, including human cytomegalovirus (HCMV), hepatitis C virus (HCV), west Nile virus (WNV), dengue virus, sindbis virus, influenza A virus, sendai virus, vesicular stomatitis virus (VSV), zika virus, and human immunodeficiency virus (HIV-1). Also promotes TLR7 and TLR9-dependent production of IFN-beta production in plasmacytoid dendritic cells (pDCs) by facilitating 'Lys-63'-linked ubiquitination of IRAK1 by TRAF6. Plays a role in CD4+ T-cells activation and differentiation. Facilitates T-cell receptor (TCR)-mediated GATA3 activation and optimal T-helper 2 (Th2) cytokine production by modulating NFKB1 and JUNB activities. Can inhibit secretion of soluble proteins. The polypeptide is S-adenosylmethionine-dependent nucleotide dehydratase RSAD2 (Homo sapiens (Human)).